The following is a 585-amino-acid chain: MASPGSGFWSFGSEDGSGDPENSGTARAWCQVAQKFTGGIGNKLCALLYGDAEKPAESGGSQPPRTTSRKATCACNQKPCNCPKAEVNYAFLHATDLLPACDGERPTLAFLQDVMDILLQYVVKSFDRSTKVIDFHYPNELLQEYNWELADQPQNLEEILMHCQTTLKYAIKTGHPRYFNQLSTGLDMVGLAADWLTSTANTNMFTYEIAPVFVLLEYVTLKKMREIIGWPGGSGDGIFSPGGAISNMYAMLIARFKMFPEVKEKGMAAVPRLIAFTSEHSHFSLKKGAAALGIGTDSVILIKCDERGKMIPSDLERRILEAKQKGFVPFLVSATAGTTVYGAFDPLLAVADICKKYKIWMHVDAAWGGGLLMSRKHKWKLSGVERANSVTWNPHKMMGVPLQCSALLVREEGLMQSCNQMHASYLFQQDKHYDLSYDTGDKALQCGRHVDVFKLWLMWRAKGTTGFEAHIDKCLELAEYLYNIIKNREGYEMVFDGKPQHTNVCFWYVPPSLRVLDNNEERMSRLSKVAPVIKARMMESGTTMVSYQPLGDKVNFFRMVISNPAATHQDIDFLIEEIERLGQDL.

Residues 1–24 (MASPGSGFWSFGSEDGSGDPENSG) form a disordered region. A phosphoserine mark is found at Ser3, Ser6, Ser10, and Ser13. S-palmitoyl cysteine attachment occurs at residues Cys30 and Cys45. Residue 181–183 (QLS) coordinates substrate. An N6-(pyridoxal phosphate)lysine modification is found at Lys396. Arg558 contributes to the substrate binding site.

Belongs to the group II decarboxylase family. Homodimer. Pyridoxal 5'-phosphate serves as cofactor. Phosphorylated; which does not affect kinetic parameters or subcellular location. Post-translationally, palmitoylated; which is required for presynaptic clustering.

It is found in the cytoplasm. The protein localises to the cytosol. The protein resides in the cytoplasmic vesicle. Its subcellular location is the presynaptic cell membrane. It localises to the golgi apparatus membrane. It carries out the reaction L-glutamate + H(+) = 4-aminobutanoate + CO2. Catalyzes the production of GABA. The chain is Glutamate decarboxylase 2 (GAD2) from Sus scrofa (Pig).